We begin with the raw amino-acid sequence, 268 residues long: MDFFNLLEAAFLGLIEGLTEFIPVSSTGHLLLIGHFLGFESTGKTFEVLIQLGAILAILSVYSAKLARIATDFPRDARTRRFVLGVLVAFLPAAVIGALAHGFIKGVLFETPMLVCIMLIVGGFILLWVDQLNLRPRYHNVMDYPLPICLAIGFIQCLAMIPGVSRSGSTIVGSLLLGADKRSAAEFSFFLAMPTMAGAFAYDLFKSRNILSFNDGALIVVGFIMAFISGVFVVRHLLDYVSRHGFALFGWWRLIVGSAGMAALIIWG.

Transmembrane regions (helical) follow at residues 3-23 (FFNL…EFIP), 46-66 (FEVL…SAKL), 84-104 (LGVL…HGFI), 107-127 (VLFE…FILL), 144-164 (YPLP…IPGV), 185-205 (AEFS…YDLF), 213-233 (FNDG…GVFV), and 246-266 (FALF…ALII).

Belongs to the UppP family.

Its subcellular location is the cell inner membrane. It catalyses the reaction di-trans,octa-cis-undecaprenyl diphosphate + H2O = di-trans,octa-cis-undecaprenyl phosphate + phosphate + H(+). In terms of biological role, catalyzes the dephosphorylation of undecaprenyl diphosphate (UPP). Confers resistance to bacitracin. In Brucella abortus (strain S19), this protein is Undecaprenyl-diphosphatase.